The primary structure comprises 208 residues: Protein-L-isoaspartate O-methyltransferase (208 aa).

S59 is a catalytic residue.

Belongs to the methyltransferase superfamily. L-isoaspartyl/D-aspartyl protein methyltransferase family.

It is found in the cytoplasm. The enzyme catalyses [protein]-L-isoaspartate + S-adenosyl-L-methionine = [protein]-L-isoaspartate alpha-methyl ester + S-adenosyl-L-homocysteine. In terms of biological role, catalyzes the methyl esterification of L-isoaspartyl residues in peptides and proteins that result from spontaneous decomposition of normal L-aspartyl and L-asparaginyl residues. It plays a role in the repair and/or degradation of damaged proteins. This chain is Protein-L-isoaspartate O-methyltransferase, found in Aliivibrio fischeri (strain MJ11) (Vibrio fischeri).